The following is a 176-amino-acid chain: Acireductone dioxygenase (176 aa).

Fe(2+)-binding residues include histidine 100, histidine 102, glutamate 106, and histidine 145. Ni(2+) is bound by residues histidine 100, histidine 102, glutamate 106, and histidine 145.

Belongs to the acireductone dioxygenase (ARD) family. In terms of assembly, monomer. It depends on Fe(2+) as a cofactor. Ni(2+) is required as a cofactor.

The catalysed reaction is 1,2-dihydroxy-5-(methylsulfanyl)pent-1-en-3-one + O2 = 3-(methylsulfanyl)propanoate + CO + formate + 2 H(+). The enzyme catalyses 1,2-dihydroxy-5-(methylsulfanyl)pent-1-en-3-one + O2 = 4-methylsulfanyl-2-oxobutanoate + formate + 2 H(+). Its pathway is amino-acid biosynthesis; L-methionine biosynthesis via salvage pathway; L-methionine from S-methyl-5-thio-alpha-D-ribose 1-phosphate: step 5/6. Catalyzes 2 different reactions between oxygen and the acireductone 1,2-dihydroxy-3-keto-5-methylthiopentene (DHK-MTPene) depending upon the metal bound in the active site. Fe-containing acireductone dioxygenase (Fe-ARD) produces formate and 2-keto-4-methylthiobutyrate (KMTB), the alpha-ketoacid precursor of methionine in the methionine recycle pathway. Ni-containing acireductone dioxygenase (Ni-ARD) produces methylthiopropionate, carbon monoxide and formate, and does not lie on the methionine recycle pathway. The polypeptide is Acireductone dioxygenase (Bacillus pumilus (strain SAFR-032)).